The sequence spans 81 residues: Cytochrome b559 subunit alpha (81 aa).

Residues 21–35 (VIHSITIPMLFIAGW) traverse the membrane as a helical segment. Residue His-23 participates in heme binding.

This sequence belongs to the PsbE/PsbF family. Heterodimer of an alpha subunit and a beta subunit. PSII is composed of 1 copy each of membrane proteins PsbA, PsbB, PsbC, PsbD, PsbE, PsbF, PsbH, PsbI, PsbJ, PsbK, PsbL, PsbM, PsbT, PsbX, PsbY, PsbZ, Psb30/Ycf12, peripheral proteins PsbO, CyanoQ (PsbQ), PsbU, PsbV and a large number of cofactors. It forms dimeric complexes. It depends on heme b as a cofactor.

The protein resides in the cellular thylakoid membrane. Functionally, this b-type cytochrome is tightly associated with the reaction center of photosystem II (PSII). PSII is a light-driven water:plastoquinone oxidoreductase that uses light energy to abstract electrons from H(2)O, generating O(2) and a proton gradient subsequently used for ATP formation. It consists of a core antenna complex that captures photons, and an electron transfer chain that converts photonic excitation into a charge separation. The protein is Cytochrome b559 subunit alpha of Crocosphaera subtropica (strain ATCC 51142 / BH68) (Cyanothece sp. (strain ATCC 51142)).